Reading from the N-terminus, the 620-residue chain is Endoglucanase 21 (620 aa).

The interval 1–39 (MYGRDPWGGPLEINAADSMTDDDRSRNLQDLDRATPSRP) is disordered. At 1 to 70 (MYGRDPWGGP…DLGCILVSRK (70 aa)) the chain is on the cytoplasmic side. The span at 21 to 39 (DDDRSRNLQDLDRATPSRP) shows a compositional bias: basic and acidic residues. The helical; Signal-anchor for type II membrane protein transmembrane segment at 71-91 (IFLWTLGTIVVTALLSGFITL) threads the bilayer. At 92-620 (IVKTLPHHHH…TPPPPAPWTP (529 aa)) the chain is on the extracellular side. 2 N-linked (GlcNAc...) asparagine glycosylation sites follow: N108 and N134. The active-site Nucleophile is D166. N-linked (GlcNAc...) asparagine glycosylation is found at N217, N325, N346, N409, N426, and N482. Residues H514 and D561 contribute to the active site. Residue N567 is glycosylated (N-linked (GlcNAc...) asparagine). E570 is a catalytic residue.

The protein belongs to the glycosyl hydrolase 9 (cellulase E) family. In terms of tissue distribution, expressed in conductive tissues of young roots, cotyledons, rosette leaves, cauline leaves and sepals. Expressed in the leaf trichome support cells.

It is found in the cell membrane. It catalyses the reaction Endohydrolysis of (1-&gt;4)-beta-D-glucosidic linkages in cellulose, lichenin and cereal beta-D-glucans.. The chain is Endoglucanase 21 (KOR3) from Arabidopsis thaliana (Mouse-ear cress).